The sequence spans 630 residues: MDLTQIQNPSFLKDMSISELEGLSEDIRKFLIEELSQTGGHIAPNLGVVELTIALHKLFDSPQDKFLWDVGHQSYVHKILTGRAKEFGTLRQYQGLCGFPKRCESEHDVWETGHSSTSLSAAMGMALARDLKKTKEYVIPIIGDGALTGGMALEALNHIGHEKTDMIVILNDNEMSIAPNVGALHNVLGRLRTAGKYHWVKDELEYILKKIPAVGGKVAATAEKIKDSLKYLLVSGVFFEELGFTYLGPVDGHDYEKLFETLQYAKKTKGPVLVHVITKKGKGYKPAESDVIGTWHGTGPYKIESGDFVKPKEVAPAWSAVVSETVLKLARADERIVAITPAMPVGSKLEKFQKEFPNRMIDVGIAEQHATTMAAGMATQGMKPFLAIYSTFLQRAYDQVVHDICRQNLNVFIGIDRSGLVGADGETHQGVFDISFLRHLPNMVLMMPKDENEGQHLVYTAMQYEDGPIALRYARGNGLGVHMDEELKAIPIGTWETLKEGTQAAILTFGTTIPMAMEAAERLEKAGVSVKVVNARFIKPMDEAYLHDLLGKNIPILTIEEACLIGGFGTGVVEFASENGYHSALVERMGIPDRFIEHGSVTKLLEEIGLTTDAVVDRIHTMIPSKQKRA.

Thiamine diphosphate contacts are provided by residues histidine 72 and 113-115; that span reads GHS. Aspartate 144 contributes to the Mg(2+) binding site. Thiamine diphosphate is bound by residues 145–146, asparagine 173, tyrosine 284, and glutamate 367; that span reads GA. Asparagine 173 serves as a coordination point for Mg(2+).

Belongs to the transketolase family. DXPS subfamily. In terms of assembly, homodimer. Mg(2+) is required as a cofactor. It depends on thiamine diphosphate as a cofactor.

The enzyme catalyses D-glyceraldehyde 3-phosphate + pyruvate + H(+) = 1-deoxy-D-xylulose 5-phosphate + CO2. Its pathway is metabolic intermediate biosynthesis; 1-deoxy-D-xylulose 5-phosphate biosynthesis; 1-deoxy-D-xylulose 5-phosphate from D-glyceraldehyde 3-phosphate and pyruvate: step 1/1. Catalyzes the acyloin condensation reaction between C atoms 2 and 3 of pyruvate and glyceraldehyde 3-phosphate to yield 1-deoxy-D-xylulose-5-phosphate (DXP). This chain is 1-deoxy-D-xylulose-5-phosphate synthase, found in Bacillus cereus (strain G9842).